The chain runs to 235 residues: Protein FEV (235 aa).

Residues 58-138 (IQLWQFLLEL…HGKRYAYKFD (81 aa)) constitute a DNA-binding region (ETS).

It belongs to the ETS family. In terms of tissue distribution, expressed by serotonergic neurons in anterior and posterior raphe.

Its subcellular location is the nucleus. Its function is as follows. Functions as a transcriptional regulator. Functions in the differentiation and the maintenance of the central serotonergic neurons. May play a role in cell growth. The chain is Protein FEV (fev) from Danio rerio (Zebrafish).